We begin with the raw amino-acid sequence, 602 residues long: MEGTGLLTAVLVFLFAAVVAVPIAQRLGIGAVLGYLIAGIAIGPWGLGFIRDVDEILHFSELGVVFLMFIIGLELNPAKLWQLRRSIFGVGAGQVVITAAVLGALLYFTQFAWQAAVIGGVGLAMSSTAMALQLMREKGMNRNEGGQLGFSVLLFQDMAVIPALALIPILAGNEGGANDWVKIGLKIAAFAGMLIGGRYLLRPLFRYIVASGVREVFTAAALLVVLGSALFMDALGLSMALGTFIAGILLAESEFQHELEIAIEPFKGLLLGLFFISVGMALDLGVLFTHLLDVLLGVLALVFIKSAILYGLARVFGLRRSVRLQFAGVLSQGGEFAFVLFSAAFSQRVLNAEQLALLLVVVTLSMMTTPLLMQVIDRILVRRYNAQEESDEKPFVEDNDPQVIIVGFGRFGQVIGRLLMANKMRITVLERDVSAVSMMRKYGYKVYYGDATELELLRAAGAEKAKAIVITCNEPEDTMALVHLCQQHFPNLHILARARGRVEAHELLQNGVKDFTRETFSSALELGRKTLLELGMHPHQAYRAQQHFRRLDMRMLRELMPQHHGDVAQISRIKEARRELEDIFQREMLHESRQLDGWDEYE.

13 helical membrane passes run 4 to 24 (TGLLTAVLVFLFAAVVAVPIA), 29 to 49 (IGAVLGYLIAGIAIGPWGLGF), 55 to 75 (EILHFSELGVVFLMFIIGLEL), 87 to 107 (IFGVGAGQVVITAAVLGALLY), 115 to 135 (AAVIGGVGLAMSSTAMALQLM), 152 to 172 (VLLFQDMAVIPALALIPILAG), 181 to 201 (VKIGLKIAAFAGMLIGGRYLL), 207 to 227 (YIVASGVREVFTAAALLVVLG), 230 to 250 (LFMDALGLSMALGTFIAGILL), 261 to 281 (IAIEPFKGLLLGLFFISVGMA), 296 to 318 (LGVLALVFIKSAILYGLARVFGL), 326 to 346 (FAGVLSQGGEFAFVLFSAAFS), and 356 to 376 (ALLLVVVTLSMMTTPLLMQVI). One can recognise an RCK N-terminal domain in the interval 400–519 (DPQVIIVGFG…NGVKDFTRET (120 aa)).

The protein belongs to the monovalent cation:proton antiporter 2 (CPA2) transporter (TC 2.A.37) family. KefB subfamily. As to quaternary structure, interacts with the regulatory subunit KefG.

Its subcellular location is the cell inner membrane. Its function is as follows. Pore-forming subunit of a potassium efflux system that confers protection against electrophiles. Catalyzes K(+)/H(+) antiport. This Yersinia pestis bv. Antiqua (strain Antiqua) protein is Glutathione-regulated potassium-efflux system protein KefB.